A 200-amino-acid chain; its full sequence is Lipopolysaccharide core heptose(II)-phosphate phosphatase (200 aa).

Positions 1-25 (MLAFCRSSLKSKKYFIILLALAAIA) are cleaved as a signal peptide.

The protein belongs to the phosphoglycerate mutase family. Ais subfamily.

The protein localises to the periplasm. It functions in the pathway bacterial outer membrane biogenesis; lipopolysaccharide metabolism. Its function is as follows. Catalyzes the dephosphorylation of heptose(II) of the outer membrane lipopolysaccharide core. This is Lipopolysaccharide core heptose(II)-phosphate phosphatase from Escherichia coli O157:H7 (strain EC4115 / EHEC).